A 561-amino-acid chain; its full sequence is Septation ring formation regulator EzrA (561 aa).

The Extracellular portion of the chain corresponds to 1 to 3; that stretch reads MWI. The helical transmembrane segment at 4-22 threads the bilayer; that stretch reads VVFSLLVLTVTFFVYGALR. At 23 to 561 the chain is on the cytoplasmic side; it reads RKAFYKRVDK…VLEKVQHLAG (539 aa). Coiled-coil stretches lie at residues 98–130, 166–214, and 251–465; these read RFQK…IQVL, AKVF…HLLK, and FAID…KLSD.

Belongs to the EzrA family.

The protein localises to the cell membrane. In terms of biological role, negative regulator of FtsZ ring formation; modulates the frequency and position of FtsZ ring formation. Inhibits FtsZ ring formation at polar sites. Interacts either with FtsZ or with one of its binding partners to promote depolymerization. The sequence is that of Septation ring formation regulator EzrA from Halalkalibacterium halodurans (strain ATCC BAA-125 / DSM 18197 / FERM 7344 / JCM 9153 / C-125) (Bacillus halodurans).